The following is a 349-amino-acid chain: UDP-N-acetylenolpyruvoylglucosamine reductase (349 aa).

The FAD-binding PCMH-type domain maps to 24–197 (FGIAATARFA…VSVTFRLPKQ (174 aa)). The active site involves arginine 173. Catalysis depends on serine 249, which acts as the Proton donor. Residue glutamate 345 is part of the active site.

This sequence belongs to the MurB family. FAD is required as a cofactor.

Its subcellular location is the cytoplasm. It catalyses the reaction UDP-N-acetyl-alpha-D-muramate + NADP(+) = UDP-N-acetyl-3-O-(1-carboxyvinyl)-alpha-D-glucosamine + NADPH + H(+). It participates in cell wall biogenesis; peptidoglycan biosynthesis. In terms of biological role, cell wall formation. In Burkholderia lata (strain ATCC 17760 / DSM 23089 / LMG 22485 / NCIMB 9086 / R18194 / 383), this protein is UDP-N-acetylenolpyruvoylglucosamine reductase.